A 122-amino-acid polypeptide reads, in one-letter code: Large ribosomal subunit protein uL18 (122 aa).

It belongs to the universal ribosomal protein uL18 family. Part of the 50S ribosomal subunit; part of the 5S rRNA/L5/L18/L25 subcomplex. Contacts the 5S and 23S rRNAs.

Its function is as follows. This is one of the proteins that bind and probably mediate the attachment of the 5S RNA into the large ribosomal subunit, where it forms part of the central protuberance. This Agathobacter rectalis (strain ATCC 33656 / DSM 3377 / JCM 17463 / KCTC 5835 / VPI 0990) (Eubacterium rectale) protein is Large ribosomal subunit protein uL18.